The chain runs to 384 residues: Dual specificity protein phosphatase 9 (384 aa).

At Ser16 the chain carries Phosphoserine. In terms of domain architecture, Rhodanese spans 18–139 (PRPRLLLLDC…FQAECPHLCE (122 aa)). The 144-residue stretch at 203–346 (FPVQILPNLY…LLDFERSLRL (144 aa)) folds into the Tyrosine-protein phosphatase domain. Ser262 bears the Phosphoserine mark. Cys290 (phosphocysteine intermediate) is an active-site residue. The tract at residues 348–384 (ERHSQEQGSGGQASAASNPPSFFTTPTSDGAFELAPT) is disordered. Phosphoserine is present on Ser351. The span at 359–375 (QASAASNPPSFFTTPTS) shows a compositional bias: polar residues.

Belongs to the protein-tyrosine phosphatase family. Non-receptor class dual specificity subfamily.

It is found in the cytoplasm. It catalyses the reaction O-phospho-L-tyrosyl-[protein] + H2O = L-tyrosyl-[protein] + phosphate. The catalysed reaction is O-phospho-L-seryl-[protein] + H2O = L-seryl-[protein] + phosphate. The enzyme catalyses O-phospho-L-threonyl-[protein] + H2O = L-threonyl-[protein] + phosphate. In terms of biological role, inactivates MAP kinases. Has a specificity for the ERK family. This is Dual specificity protein phosphatase 9 (DUSP9) from Homo sapiens (Human).